The chain runs to 315 residues: Olfactory receptor 2V2 (315 aa).

The Extracellular portion of the chain corresponds to 1–26; the sequence is METWVNQSYTDGFFLLGIFSHSTADL. An N-linked (GlcNAc...) asparagine glycan is attached at Asn6. Residues 27 to 50 traverse the membrane as a helical segment; that stretch reads VLFSVVMAVFTVALCGNVLLIFLI. Residues 51–58 are Cytoplasmic-facing; the sequence is YMDPHLHT. A helical membrane pass occupies residues 59–80; the sequence is PMYFFLSQLSLMDLMLVCTNVP. Residues 81-101 lie on the Extracellular side of the membrane; the sequence is KMAANFLSGRKSISFVGCGIQ. A disulfide bridge links Cys98 with Cys190. Residues 102–121 traverse the membrane as a helical segment; sequence IGLFVCLVGSEGLLLGLMAY. The Cytoplasmic segment spans residues 122-140; that stretch reads DRYVAISHPLHYPILMNQR. Residues 141–159 traverse the membrane as a helical segment; that stretch reads VCLQITGSSWAFGIIDGLI. Over 160-196 the chain is Extracellular; the sequence is QMVVVMNFPYCGLRKVNHFFCEMLSLLKLACVDTSLF. A helical membrane pass occupies residues 197–220; the sequence is EKVIFACCVFMLLFPFSIIVASYA. Residues 221–237 lie on the Cytoplasmic side of the membrane; the sequence is HILGTVLQMHSAQAWKK. The helical transmembrane segment at 238-260 threads the bilayer; that stretch reads ALATCSSHLTAVTLFYGAAMFIY. At 261 to 273 the chain is on the extracellular side; the sequence is LRPRHYRAPSHDK. A helical membrane pass occupies residues 274 to 293; the sequence is VASIFYTVLTPMLNPLIYSL. The Cytoplasmic portion of the chain corresponds to 294-315; the sequence is RNREVMGALRKGLDRCRIGSQH.

It belongs to the G-protein coupled receptor 1 family.

The protein localises to the cell membrane. Its function is as follows. Odorant receptor. The sequence is that of Olfactory receptor 2V2 (OR2V2) from Homo sapiens (Human).